Consider the following 184-residue polypeptide: ATP synthase subunit b, chloroplastic (184 aa).

The chain crosses the membrane as a helical span at residues 27–49 (LATNPINLSVVLGVLIFFGKGVL).

This sequence belongs to the ATPase B chain family. F-type ATPases have 2 components, F(1) - the catalytic core - and F(0) - the membrane proton channel. F(1) has five subunits: alpha(3), beta(3), gamma(1), delta(1), epsilon(1). F(0) has four main subunits: a(1), b(1), b'(1) and c(10-14). The alpha and beta chains form an alternating ring which encloses part of the gamma chain. F(1) is attached to F(0) by a central stalk formed by the gamma and epsilon chains, while a peripheral stalk is formed by the delta, b and b' chains.

It is found in the plastid. The protein localises to the chloroplast thylakoid membrane. Functionally, f(1)F(0) ATP synthase produces ATP from ADP in the presence of a proton or sodium gradient. F-type ATPases consist of two structural domains, F(1) containing the extramembraneous catalytic core and F(0) containing the membrane proton channel, linked together by a central stalk and a peripheral stalk. During catalysis, ATP synthesis in the catalytic domain of F(1) is coupled via a rotary mechanism of the central stalk subunits to proton translocation. Component of the F(0) channel, it forms part of the peripheral stalk, linking F(1) to F(0). The protein is ATP synthase subunit b, chloroplastic of Oenothera elata subsp. hookeri (Hooker's evening primrose).